A 264-amino-acid chain; its full sequence is MNIKKGKFLETILAEKRLEIAKMPEEQVGKVRQTYNFYDYLKEHSDQLQVIAEVKKASPSLGDINLEVDIVDQAKNYEQAGAAMISVLTDPVFFKGNIEYLCEISENVQIPTLNKDFIIDKKQINRAVNAGATVILLIVAVFENQYPKLQNLYNYALSLGLEVLVETHNKAELEIAHQLGAKIIGVNNRNLKTFEVILQNSVDLTPYFKEDSIYISESGIFSANEAQKVSDTFNGILVGTALMQSENLEKSLKDLKVKRKTNEN.

Belongs to the TrpC family.

The catalysed reaction is 1-(2-carboxyphenylamino)-1-deoxy-D-ribulose 5-phosphate + H(+) = (1S,2R)-1-C-(indol-3-yl)glycerol 3-phosphate + CO2 + H2O. It participates in amino-acid biosynthesis; L-tryptophan biosynthesis; L-tryptophan from chorismate: step 4/5. This is Indole-3-glycerol phosphate synthase (trpC) from Lactococcus lactis subsp. lactis (strain IL1403) (Streptococcus lactis).